Reading from the N-terminus, the 106-residue chain is MVKQIESKTAFQEALDAAGDKLVVVDFSATWCGPCKMIKPFFHSLSEKYSNVIFLEVDVDDCQDVASECEVKCMPTFQFFFKKGQKVGEFSGANKEKLEATINELV.

At Lys-3 the chain carries N6-acetyllysine. A Thioredoxin domain is found at 3 to 106 (KQIESKTAFQ…KLEATINELV (104 aa)). Lys-8 carries the post-translational modification N6-succinyllysine. Active-site nucleophile residues include Cys-32 and Cys-35. An intrachain disulfide couples Cys-32 to Cys-35. Lys-39 carries the N6-acetyllysine modification. An S-nitrosocysteine mark is found at Cys-62 and Cys-69. Residue Cys-73 is modified to S-nitrosocysteine; alternate. Lys-95 carries the N6-acetyllysine; alternate modification. The residue at position 95 (Lys-95) is an N6-succinyllysine; alternate.

Belongs to the thioredoxin family. Homodimer; disulfide-linked. Interacts with TXNIP through the redox-active site. Interacts with MAP3K5 and CASP3. Interacts with APEX1; the interaction stimulates the FOS/JUN AP-1 DNA-binding activity in a redox-dependent manner. In terms of processing, in the fully reduced protein, both Cys-69 and Cys-73 are nitrosylated in response to nitric oxide (NO). When two disulfide bonds are present in the protein, only Cys-73 is nitrosylated. Cys-73 can serve as donor for nitrosylation of target proteins.

The protein localises to the nucleus. It localises to the cytoplasm. The protein resides in the secreted. In terms of biological role, participates in various redox reactions through the reversible oxidation of its active center dithiol to a disulfide and catalyzes dithiol-disulfide exchange reactions. Plays a role in the reversible S-nitrosylation of cysteine residues in target proteins, and thereby contributes to the response to intracellular nitric oxide. Nitrosylates the active site Cys of CASP3 in response to nitric oxide (NO), and thereby inhibits caspase-3 activity. Induces the FOS/JUN AP-1 DNA binding activity in ionizing radiation (IR) cells through its oxidation/reduction status and stimulates AP-1 transcriptional activity. This chain is Thioredoxin (TXN), found in Pongo abelii (Sumatran orangutan).